The chain runs to 185 residues: Ribosome-recycling factor (185 aa).

Belongs to the RRF family.

The protein resides in the cytoplasm. Functionally, responsible for the release of ribosomes from messenger RNA at the termination of protein biosynthesis. May increase the efficiency of translation by recycling ribosomes from one round of translation to another. This chain is Ribosome-recycling factor, found in Haemophilus influenzae (strain ATCC 51907 / DSM 11121 / KW20 / Rd).